Consider the following 690-residue polypeptide: Elongation factor G (690 aa).

Positions 8–283 constitute a tr-type G domain; sequence DKYRNIGIMA…AVVDFLPSPL (276 aa). Residues 17–24, 81–85, and 135–138 contribute to the GTP site; these read AHIDAGKT, DTPGH, and NKLD.

Belongs to the TRAFAC class translation factor GTPase superfamily. Classic translation factor GTPase family. EF-G/EF-2 subfamily.

It localises to the cytoplasm. Catalyzes the GTP-dependent ribosomal translocation step during translation elongation. During this step, the ribosome changes from the pre-translocational (PRE) to the post-translocational (POST) state as the newly formed A-site-bound peptidyl-tRNA and P-site-bound deacylated tRNA move to the P and E sites, respectively. Catalyzes the coordinated movement of the two tRNA molecules, the mRNA and conformational changes in the ribosome. The chain is Elongation factor G from Zymomonas mobilis subsp. mobilis (strain ATCC 31821 / ZM4 / CP4).